A 320-amino-acid chain; its full sequence is Ribosomal RNA large subunit methyltransferase F (320 aa).

Residues 1–20 (MHKSANSKTRKQSKGLHPRN) form a disordered region.

This sequence belongs to the methyltransferase superfamily. METTL16/RlmF family.

It is found in the cytoplasm. The enzyme catalyses adenosine(1618) in 23S rRNA + S-adenosyl-L-methionine = N(6)-methyladenosine(1618) in 23S rRNA + S-adenosyl-L-homocysteine + H(+). Specifically methylates the adenine in position 1618 of 23S rRNA. This Saccharophagus degradans (strain 2-40 / ATCC 43961 / DSM 17024) protein is Ribosomal RNA large subunit methyltransferase F.